Consider the following 210-residue polypeptide: 3-hexulose-6-phosphate synthase (210 aa).

It belongs to the HPS/KGPDC family. HPS subfamily.

The enzyme catalyses D-ribulose 5-phosphate + formaldehyde = D-arabino-hex-3-ulose 6-phosphate. Its pathway is one-carbon metabolism; formaldehyde assimilation via RuMP pathway; D-fructose 6-phosphate from D-ribulose 5-phosphate and formaldehyde: step 1/2. Catalyzes the condensation of ribulose 5-phosphate with formaldehyde to form 3-hexulose 6-phosphate. This chain is 3-hexulose-6-phosphate synthase, found in Staphylococcus aureus (strain MRSA252).